The chain runs to 1026 residues: Phosphoenolpyruvate carboxylase (1026 aa).

Residues His-199 and Lys-672 contribute to the active site.

It belongs to the PEPCase type 1 family. Mg(2+) is required as a cofactor.

It catalyses the reaction oxaloacetate + phosphate = phosphoenolpyruvate + hydrogencarbonate. Its function is as follows. Forms oxaloacetate, a four-carbon dicarboxylic acid source for the tricarboxylic acid cycle. In Nostoc sp. (strain PCC 7120 / SAG 25.82 / UTEX 2576), this protein is Phosphoenolpyruvate carboxylase (ppc).